We begin with the raw amino-acid sequence, 507 residues long: NADH-quinone oxidoreductase subunit N (507 aa).

15 helical membrane-spanning segments follow: residues L17–A37, V46–G66, Y81–Y101, A113–H133, F134–Y154, Y168–A188, L190–E210, L211–V231, P245–L265, I279–L299, I307–D327, V334–V354, A392–I412, S425–M445, and L478–V498.

It belongs to the complex I subunit 2 family. As to quaternary structure, NDH-1 is composed of 14 different subunits. Subunits NuoA, H, J, K, L, M, N constitute the membrane sector of the complex.

It localises to the cell inner membrane. It carries out the reaction a quinone + NADH + 5 H(+)(in) = a quinol + NAD(+) + 4 H(+)(out). Its function is as follows. NDH-1 shuttles electrons from NADH, via FMN and iron-sulfur (Fe-S) centers, to quinones in the respiratory chain. The immediate electron acceptor for the enzyme in this species is believed to be ubiquinone. Couples the redox reaction to proton translocation (for every two electrons transferred, four hydrogen ions are translocated across the cytoplasmic membrane), and thus conserves the redox energy in a proton gradient. The polypeptide is NADH-quinone oxidoreductase subunit N (Nitrosospira multiformis (strain ATCC 25196 / NCIMB 11849 / C 71)).